We begin with the raw amino-acid sequence, 305 residues long: UDP-N-acetylenolpyruvoylglucosamine reductase (305 aa).

Residues 34-199 (RVGGPAQVLF…TSARFRGEVK (166 aa)) enclose the FAD-binding PCMH-type domain. The active site involves R179. The active-site Proton donor is the S228. The active site involves E298.

The protein belongs to the MurB family. It depends on FAD as a cofactor.

It localises to the cytoplasm. It carries out the reaction UDP-N-acetyl-alpha-D-muramate + NADP(+) = UDP-N-acetyl-3-O-(1-carboxyvinyl)-alpha-D-glucosamine + NADPH + H(+). It functions in the pathway cell wall biogenesis; peptidoglycan biosynthesis. In terms of biological role, cell wall formation. The chain is UDP-N-acetylenolpyruvoylglucosamine reductase from Bradyrhizobium diazoefficiens (strain JCM 10833 / BCRC 13528 / IAM 13628 / NBRC 14792 / USDA 110).